Consider the following 2084-residue polypeptide: MNLEVLCGRINVENGLSLGEPGLYDQIYDRPGLPDLDVTVDATGVTVDIGAVPDSASQLGSSINAGLITIQLSEAYKINHDFTFSGLSKTTDRRLSEVFPITHDGSDGMTPDVIHTRLDGTIVVVEFTTTRSHNIGGLEAAYRTKIEKYRDPISRRVDIMENPRVFFGVIVVSSGGVLSNMPLTQDEAEELMYRFCIANEIYTKARSMDADIELQKSEEELEAISRALSFFSLFEPNIERVEGTFPNSEIEMLEQFLSTPADVDFITKTLKAKEVEAYADLCDSHYLKPEKTIQERLEINRCEAIDKTQDLLAGLHARSNKQTSLNRGTVKLPPWLPKPSSESIDIKTDSGFGSLMDHGAYGELWAKCLLDVSLGNVEGVVSDPAKELDIAISDDPEKDTPKEAKITYRRFKPALSSSARQEFSLQGVEGKKWKRMAANQKKEKESHDALSPFLDVEDIGDFLTFNNLLADSRYGDESVQRAVSILLEKASAMQDTELTHALNDSFKRNLSSNVVQWSLWVSCLAQELASALKQHCRAGEFIIKKLKFWPIYVIIKPTKSSSHIFYSLGIRKADVTRRLTGRVFSETIDAGEWELTEFKSLKTCKLTNLVNLPCTMLNSIAFWREKLGVAPWLVRKPCSELREQVGLTFLISLEDKSKTEEIITLTRYTQMEGFVSPPMLPKPQKMLGKLDGPLRTKLQVYLLRKHLDCMVRIASQPFSLIPREGRVEWGGTFHAISGRSTNLENMVNSWYIGYYKNKEESTELNALGEMYKKIVEMEEDKPSSPEFLGWGDTDSPKKHEFSRSFLRAACSSLEREIAQRHGRQWKQNLEERVLREIGTKNILDLASMKATSNFSKDWELYSEVQTKEYHRSKLLEKMATLIEKGVMWYIDAVGQAWKAVLDDGCMRICLFKKNQHGGLREIYVMDANARLVQFGVETMARCVCELSPHETVANPRLKNSIIENHGLKSARSLGPGSININSSNDAKKWNQGHYTTKLALVLCWFMPAKFHRFIWAAISMFRRKKMMVDLRFLAHLSSKSESRSSDPFREAMTDAFHGNREVSWMDKGRTYIKTETGMMQGILHFTSSLLHSCVQSFYKSYFVSKLKEGYMGESISGVVDVIEGSDDSAIMISIRPKSDMDEVRSRFFVANLLHSVKFLNPLFGIYSSEKSTVNTVYCVEYNSEFHFHRHLVRPTLRWIAASHQISETEALASRQEDYSNLLTQCLEGGASFSLTYLIQCAQLLHHYMLLGLCLHPLFGTFMGMLISDPDPALGFFLMDNPAFAGGAGFRFNLWRACKTTDLGRKYAYYFNEIQGKTKGDEDYRALDATSGGTLSHSVMVYWGDRKKYQALLNRMGLPEDWVEQIDENPGVLYRRAANKKELLLKLAEKVHSPGVTSSLSKGHVVPRVVAAGVYLLSRHCFRFSSSIHGRGSTQKASLIKLLMMSSISAMKHGGSLNPNQERMLFPQAQEYDRVCTLLEEVEHLTGKFVVRERNIVRSRIDLFQEPVDLRCKAEDLVSEVWFGLKRTKLGPRLLKEEWDKLRASFAWLSTDPSETLRDGPFLSHVQFRNFIAHVDAKSRSVRLLGAPVKKSGGVTTISQVVRMNFFPGFSLEAEKSLDNQERLESISILKHVLFMVLNGPYTEEYKLEMIIEAFSTLVIPQPSEVIRKSRTMTLCLLSNYLSSRGGSILDQIERAQSGTLGGFSKPQKTFIRPGGGVGYKGKGVWTGVMEDTHVQILIDGDGTSNWLEEIRLSSDARLYDVIESIRRLCDDLGINNRVASAYRGHCMVRLSGFKIKPASRTDGCPVRIMERGFRIRELQNPDEVKMRVRGDILNLSVTIQEGRVMNILSYRPRDTDISESAAAYLWSNRDLFSFGKKEPSCSWICLKTLDNWAWSHASVLLANDRKTQGIDNRAMGNIFRDCLEGSLRKQGLMRSKLTEMVEKNVVPLTTQELVDILEEDIDFSDVIAVELSEGSLDIESIFDGAPILWSAEVEEFGEGVVAVSYSSKYYHLTLMDQAAITMCAIMGKEGCRGLLTEKRCMAAIREQVRPFLIFLQIPEDSISWVSDQFCDSRGLDEESTIMWG.

The interval 20 to 221 (EPGLYDQIYD…IELQKSEEEL (202 aa)) is endonuclease. Mn(2+)-binding residues include His80, Asp112, and Glu126. The active-site For endonuclease activity is the Lys145. One can recognise a RdRp catalytic domain in the interval 969 to 1172 (SARSLGPGSI…FGIYSSEKST (204 aa)). Asp1127 contributes to the Mg(2+) binding site. The cap-binding stretch occupies residues 1695-1810 (AQSGTLGGFS…TDGCPVRIME (116 aa)).

The protein belongs to the Bunyavirales RNA polymerase family. In terms of assembly, homomultimer. Interacts with the glycoprotein N; this interaction allows efficient polymerase packaging into virus particles. Interacts with nucleoprotein N. Mn(2+) is required as a cofactor. The cofactor is Mg(2+).

It localises to the host Golgi apparatus. It is found in the host endoplasmic reticulum. Its subcellular location is the host endoplasmic reticulum-Golgi intermediate compartment. The protein resides in the virion. It catalyses the reaction RNA(n) + a ribonucleoside 5'-triphosphate = RNA(n+1) + diphosphate. Its activity is regulated as follows. Inhibited by Baloxavir acid (BXA). Its function is as follows. RNA-dependent RNA polymerase, which is responsible for the replication and transcription of the viral RNA genome using antigenomic RNA as an intermediate. During transcription, synthesizes subgenomic RNAs and assures their capping by a cap-snatching mechanism, which involves the endonuclease activity cleaving the host capped pre-mRNAs. These short capped RNAs are then used as primers for viral transcription. The 3'-end of subgenomic mRNAs molecules are not polyadenylated. During replication, the polymerase binds the 5' and 3' vRNA extremities at distinct sites. In turn, significant conformational changes occur in the polymerase and in vRNA to initiate active RNA synthesis. As a consequence of the use of the same enzyme for both transcription and replication, these mechanisms need to be well coordinated. This chain is RNA-directed RNA polymerase L, found in Dabie bandavirus (Severe fever with thrombocytopenia virus).